Consider the following 300-residue polypeptide: Protoheme IX farnesyltransferase (300 aa).

Transmembrane regions (helical) follow at residues 20–40 (ITKA…YLLG), 49–69 (WSVL…SNAY), 97–117 (VTAL…LYTI), 122–142 (AMFA…LKTV), 145–165 (LSVF…WVAA), 176–196 (LFLI…WFLY), 217–237 (ALQV…PVLG), 242–262 (LFIS…MLFY), and 278–298 (LMLV…VDKF).

Belongs to the UbiA prenyltransferase family. Protoheme IX farnesyltransferase subfamily.

The protein localises to the cell inner membrane. The catalysed reaction is heme b + (2E,6E)-farnesyl diphosphate + H2O = Fe(II)-heme o + diphosphate. It functions in the pathway porphyrin-containing compound metabolism; heme O biosynthesis; heme O from protoheme: step 1/1. In terms of biological role, converts heme B (protoheme IX) to heme O by substitution of the vinyl group on carbon 2 of heme B porphyrin ring with a hydroxyethyl farnesyl side group. The protein is Protoheme IX farnesyltransferase of Flavobacterium johnsoniae (strain ATCC 17061 / DSM 2064 / JCM 8514 / BCRC 14874 / CCUG 350202 / NBRC 14942 / NCIMB 11054 / UW101) (Cytophaga johnsonae).